The sequence spans 167 residues: Ribosome maturation factor RimM (167 aa).

In terms of domain architecture, PRC barrel spans 94–165 (EHEYYYSDII…TIKITPMEGL (72 aa)).

This sequence belongs to the RimM family. As to quaternary structure, binds ribosomal protein uS19.

The protein localises to the cytoplasm. In terms of biological role, an accessory protein needed during the final step in the assembly of 30S ribosomal subunit, possibly for assembly of the head region. Essential for efficient processing of 16S rRNA. May be needed both before and after RbfA during the maturation of 16S rRNA. It has affinity for free ribosomal 30S subunits but not for 70S ribosomes. The chain is Ribosome maturation factor RimM from Staphylococcus epidermidis (strain ATCC 12228 / FDA PCI 1200).